The following is a 386-amino-acid chain: Heavy metal-associated isoprenylated plant protein 5 (386 aa).

A compositionally biased stretch (basic and acidic residues) spans 1–16 (MGEVQEGPKVEQEKKP). The tract at residues 1–40 (MGEVQEGPKVEQEKKPAATVVPVETTDGKPKSGGGDSAAA) is disordered. An HMA 1 domain is found at 49-112 (VSAFVYKVDM…KLEEKTKRKV (64 aa)). A metal cation-binding residues include Cys60 and Cys63. A disordered region spans residues 129–153 (VGEKKADGGDKEAAPPAPAPAAPKE). Positions 130-141 (GEKKADGGDKEA) are enriched in basic and acidic residues. One can recognise an HMA 2 domain in the interval 153-220 (ESVVPLKIRL…KLKRTVEPLV (68 aa)). Cys164 and Cys167 together coordinate a metal cation. 2 stretches are compositionally biased toward basic and acidic residues: residues 223 to 245 (KKDD…KKEA) and 252 to 297 (EAKK…KKDG). The segment at 223 to 301 (KKDDGAAENK…EKKKDGGGVP (79 aa)) is disordered. Cys383 is subject to Cysteine methyl ester. Cys383 is lipidated: S-farnesyl cysteine. Positions 384–386 (SVM) are cleaved as a propeptide — removed in mature form.

Belongs to the HIPP family. Post-translationally, efficiently farnesylated in vitro.

Functionally, heavy-metal-binding protein. Involved in disease resistance. The sequence is that of Heavy metal-associated isoprenylated plant protein 5 from Arabidopsis thaliana (Mouse-ear cress).